A 364-amino-acid chain; its full sequence is tRNA-specific 2-thiouridylase MnmA 2 (364 aa).

Residues 10 to 17 and M36 contribute to the ATP site; that span reads GMSGGVDS. C106 serves as the catalytic Nucleophile. A disulfide bond links C106 and C204. G130 provides a ligand contact to ATP. The segment at 154–156 is interaction with tRNA; sequence KDQ. Residue C204 is the Cysteine persulfide intermediate of the active site. Residues 310 to 311 form an interaction with tRNA region; that stretch reads RY.

Belongs to the MnmA/TRMU family.

Its subcellular location is the cytoplasm. It catalyses the reaction S-sulfanyl-L-cysteinyl-[protein] + uridine(34) in tRNA + AH2 + ATP = 2-thiouridine(34) in tRNA + L-cysteinyl-[protein] + A + AMP + diphosphate + H(+). Its function is as follows. Catalyzes the 2-thiolation of uridine at the wobble position (U34) of tRNA, leading to the formation of s(2)U34. In Caldanaerobacter subterraneus subsp. tengcongensis (strain DSM 15242 / JCM 11007 / NBRC 100824 / MB4) (Thermoanaerobacter tengcongensis), this protein is tRNA-specific 2-thiouridylase MnmA 2.